The sequence spans 146 residues: Transcriptional regulator AdcR (146 aa).

In terms of domain architecture, HTH marR-type spans 1–143 (MRQLAKDINA…IQRFLTALVG (143 aa)). Positions 24, 30, 41, and 42 each coordinate Zn(2+). Positions 54–77 (NSELARRLNVSQAAVTKAIKSLVK) form a DNA-binding region, H-T-H motif. 3 residues coordinate Zn(2+): Glu107, His108, and His112.

In terms of assembly, homodimer.

Zinc acts as a coregulator and is required for DNA-binding activity. In terms of biological role, zinc-responsive regulator that acts both as a repressor and as an activator by regulating directly the promoters of its target genes. In the presence of zinc, directly represses the expression of the adcRCBA operon, of genes coding for a group of surface antigen zinc-binding pneumococcal histidine triad proteins (PhtA, PhtB, PhtD and PhtE), and of adcAII. Can also activate expression of adh. The chain is Transcriptional regulator AdcR (adcR) from Streptococcus pneumoniae serotype 2 (strain D39 / NCTC 7466).